Reading from the N-terminus, the 158-residue chain is EOLA-like protein (158 aa).

In terms of domain architecture, ASCH spans 6-92 (LSFRQPYAGF…IAGLVDIGET (87 aa)).

The protein belongs to the EOLA family.

The chain is EOLA-like protein from Pongo abelii (Sumatran orangutan).